The chain runs to 548 residues: uncharacterized protein (548 aa).

The DhaL domain maps to 8–200; it reads KLFADMIIQG…LLCVYEGFLK (193 aa).

This is an uncharacterized protein from Staphylococcus aureus (strain bovine RF122 / ET3-1).